Here is a 264-residue protein sequence, read N- to C-terminus: 3-methyl-2-oxobutanoate hydroxymethyltransferase 1 (264 aa).

Residues Asp-45 and Asp-84 each coordinate Mg(2+). Residues 45–46 (DS), Asp-84, and Lys-112 contribute to the 3-methyl-2-oxobutanoate site. Glu-114 provides a ligand contact to Mg(2+). The active-site Proton acceptor is the Glu-181.

Belongs to the PanB family. In terms of assembly, homodecamer; pentamer of dimers. Requires Mg(2+) as cofactor.

The protein localises to the cytoplasm. It carries out the reaction 3-methyl-2-oxobutanoate + (6R)-5,10-methylene-5,6,7,8-tetrahydrofolate + H2O = 2-dehydropantoate + (6S)-5,6,7,8-tetrahydrofolate. It participates in cofactor biosynthesis; (R)-pantothenate biosynthesis; (R)-pantoate from 3-methyl-2-oxobutanoate: step 1/2. Catalyzes the reversible reaction in which hydroxymethyl group from 5,10-methylenetetrahydrofolate is transferred onto alpha-ketoisovalerate to form ketopantoate. This chain is 3-methyl-2-oxobutanoate hydroxymethyltransferase 1, found in Aliivibrio fischeri (strain ATCC 700601 / ES114) (Vibrio fischeri).